The chain runs to 7096 residues: Replicase polyprotein 1ab (7096 aa).

Residues 1–147 form a disordered region; that stretch reads MESLVPGFNE…ADLKSFDLGD (147 aa). Over 1 to 2225 the chain is Cytoplasmic; it reads MESLVPGFNE…NYLKSPNFSK (2225 aa). One can recognise a CoV Nsp1 globular domain in the interval 12–127; it reads THVQLSLPVL…YRKVLLRKNG (116 aa). One can recognise a BetaCoV Nsp1 C-terminal domain in the interval 148–179; that stretch reads ELGTDPYEDFQENWNTKHSSGVTRELMRELNG. Residues 154–180 are binding to 40s ribosome mRNA entry channel; it reads YEDFQENWNTKHSSGVTRELMRELNGG. A CoV Nsp2 N-terminal domain is found at 183 to 456; the sequence is TRYVDNNFCG…NDNLLEILQK (274 aa). Zn(2+)-binding residues include Cys-200, Cys-231, His-234, His-236, Cys-323, Cys-326, Cys-341, Cys-344, Cys-370, Cys-373, His-382, and Cys-416. The C2H2 stretch occupies residues 200–236; sequence CIKDLLARAGKASCTLSEQLDFIDTKRGVYCCREHEH. Residues 323-344 are C4; that stretch reads CDHCGETSWQTGDFVKATCEFC. Residues 370–416 form a C2HC region; that stretch reads CPACHNSEVGPEHSLAEYHNESGLKTILRKGGRTIAFGGCVFSYVGC. In terms of domain architecture, CoV Nsp2 middle spans 458 to 688; sequence KVNINIVGDF…FKLVNKFLAL (231 aa). 2 LRR repeats span residues 545–569 and 697–719; these read RSIFSRTLETAQNSVRVLQKAAITI and GAKLKALNLGETFVTHSKGLYRK. Residues 690–818 enclose the CoV Nsp2 C-terminal domain; that stretch reads ADSIIIGGAK…TNNTFTLKGG (129 aa). The Ubiquitin-like 1 domain maps to 821–929; sequence TKVTFGDDTV…MYCSFYPPDE (109 aa). The interval 926 to 999 is disordered; the sequence is PPDEDEEEGD…QQDGSEDNQT (74 aa). 2 stretches are compositionally biased toward acidic residues: residues 927 to 942 and 971 to 984; these read PDEDEEEGDCEEEEFE and PEEEQEEDWLDDDS. Macro domains are found at residues 1025 to 1194, 1231 to 1359, and 1367 to 1494; these read VNSF…LEMK, KIKA…LPSI, and ILGT…TSSS. The DPUP domain maps to 1496-1561; sequence TPEEHFIETI…TFDNLKTLLS (66 aa). One can recognise a Ubiquitin-like 2 domain in the interval 1565 to 1620; that stretch reads VRTIKVFTTVDNINLHTQVVDMSMTYGQQFGPTYLDGADVTKIKPHNSHEGKTFYV. Residues 1634-1898 enclose the Peptidase C16 domain; sequence YYHTTDPSFL…CTEIDPKLDN (265 aa). Residue Cys-1674 is the For PL-PRO activity of the active site. One copy of the LRR 3 repeat lies at 1680 to 1702; it reads LLTLQQIELKFNPPALQDAYYRA. Zn(2+) contacts are provided by Cys-1752, Cys-1755, Cys-1787, and Cys-1789. The C4-type zinc-finger motif lies at 1752–1789; that stretch reads CKTCGQQQTTLKGVEAVMYMGTLSYEQFKKGVQIPCTC. Residues His-1835 and Asp-1849 each act as for PL-PRO activity in the active site. Positions 1911-2021 constitute a Nucleic acid-binding domain; that stretch reads PIDLVPNQPY…CLWSTKPVET (111 aa). Positions 2046–2155 constitute a G2M domain; that stretch reads PVSEEVVENP…LNKVVSTTTN (110 aa). A helical transmembrane segment spans residues 2226-2246; sequence LINIIIWFLLLSVCLGSLIYS. Over 2247-2317 the chain is Lumenal; that stretch reads TAALGVLMSN…QITISSFKWD (71 aa). The 3Ecto domain occupies 2247–2317; it reads TAALGVLMSN…QITISSFKWD (71 aa). Intrachain disulfides connect Cys-2263-Cys-2291 and Cys-2282-Cys-2288. The chain crosses the membrane as a helical span at residues 2318 to 2338; sequence LTAFGLVAEWFLAYILFTRFF. Residues 2339–2775 are Cytoplasmic-facing; it reads YVLGLAAIMQ…VNNWLKQLIK (437 aa). A Y1 region spans residues 2395-2485; it reads KSYVHVVDGC…QFKRPINPTD (91 aa). The CoV Nsp3 Y domain occupies 2395–2763; sequence KSYVHVVDGC…VTTKIALKGG (369 aa). The Zn(2+) site is built by His-2399, Cys-2404, Cys-2409, Cys-2412, Cys-2445, His-2448, Cys-2452, and Cys-2455. The tract at residues 2399-2412 is ZF1; it reads HVVDGCNSSTCMMC. Positions 2445 to 2455 are ZF2; sequence CKLHNWNCVNC. The tract at residues 2486–2580 is Y2; it reads QSSYIVDSVT…LLDQALVSDV (95 aa). Residues 2486–2763 are coV-Y; that stretch reads QSSYIVDSVT…VTTKIALKGG (278 aa). The tract at residues 2581 to 2662 is Y3; that stretch reads GDSAEVAVKM…ECLKLSHQSD (82 aa). The tract at residues 2663–2763 is Y4; sequence IEVTGDSCNN…VTTKIALKGG (101 aa). Residues 2776–2796 form a helical membrane-spanning segment; the sequence is VTLVFLFVAAIFYLITPVHVM. The Lumenal portion of the chain corresponds to 2797–3044; it reads SKHTDFSSEI…IQPIGALDIS (248 aa). Residues 3045–3065 form a helical membrane-spanning segment; that stretch reads ASIVAGGIVAIVVTCLAYYFM. Topologically, residues 3066 to 3099 are cytoplasmic; the sequence is RFRRAFGEYSHVVAFNTLLFLMSFTVLCLTPVYS. A helical transmembrane segment spans residues 3100 to 3120; that stretch reads FLPGVYSVIYLYLTFYLTNDV. The Lumenal segment spans residues 3121–3127; sequence SFLAHIQ. Residues 3128–3148 form a helical membrane-spanning segment; sequence WMVMFTPLVPFWITIAYIICI. The Cytoplasmic segment spans residues 3149 to 3586; that stretch reads STKHFYWFFS…KGTHHWLLLT (438 aa). The Nsp4C domain maps to 3165-3263; it reads VVFNGVSFST…QTSITSAVLQ (99 aa). The stretch at 3185–3206 is one LRR 4 repeat; the sequence is LNKEMYLKLRSDVLLPLTQYNR. Residues 3264–3569 form the Peptidase C30 domain; it reads SGFRKMAFPS…VRQCSGVTFQ (306 aa). A Glycyl lysine isopeptide (Lys-Gly) (interchain with G-Cter in ubiquitin) cross-link involves residue Lys-3268. The active-site For 3CL-PRO activity is His-3304. Lys-3353 is covalently cross-linked (Glycyl lysine isopeptide (Lys-Gly) (interchain with G-Cter in ubiquitin)). Cys-3408 acts as the Nucleophile; for 3CL-PRO activity in catalysis. The helical transmembrane segment at 3587 to 3607 threads the bilayer; sequence ILTSLLVLVQSTQWSLFFFLY. Position 3608 (Glu-3608) is a topological domain, lumenal. A helical transmembrane segment spans residues 3609-3629; that stretch reads NAFLPFAMGIIAMSAFAMMFV. The Cytoplasmic segment spans residues 3630 to 3634; the sequence is KHKHA. The helical transmembrane segment at 3635–3655 threads the bilayer; sequence FLCLFLLPSLATVAYFNMVYM. Over 3656-3673 the chain is Lumenal; sequence PASWVMRIMTWLDMVDTS. Residues 3674–3694 traverse the membrane as a helical segment; sequence LSGFKLKDCVMYASAVVLLIL. Topologically, residues 3695–3729 are cytoplasmic; it reads MTARTVYDDGARRVWTLMNVLTLVYKVYYGNALDQ. A helical membrane pass occupies residues 3730–3750; that stretch reads AISMWALIISVTSNYSGVVTT. At 3751–3778 the chain is on the lumenal side; sequence VMFLARGIVFMCVEYCPIFFITGNTLQC. The chain crosses the membrane as a helical span at residues 3779–3799; sequence IMLVYCFLGYFCTCYFGLFCL. Residues 3800–7096 lie on the Cytoplasmic side of the membrane; the sequence is LNRYFRLTLG…VISSDVLVNN (3297 aa). The region spanning 3860 to 3942 is the RdRp Nsp7 cofactor domain; the sequence is SKMSDVKCTS…EMLDNRATLQ (83 aa). The interval 3931-4020 is disordered; sequence CEEMLDNRAT…QMYKQARSED (90 aa). 2 LRR repeats span residues 3935-3959 and 3977-4004; these read LDNRATLQAIASEFSSLPSYAAFAT and LKKLKKSLNVAKSEFDRDAAMQRKLEKM. Residues 3943–4140 form the RdRp Nsp8 cofactor domain; sequence AIASEFSSLP…LRANSAVKLQ (198 aa). The region spanning 4141–4253 is the Nsp9 ssRNA-binding domain; that stretch reads NNELSPVALR…GSLAATVRLQ (113 aa). An ExoN/MTase coactivator domain is found at 4254–4392; the sequence is AGNATEVPAN…CDQLREPMLQ (139 aa). 8 residues coordinate Zn(2+): Cys-4327, Cys-4330, His-4336, Cys-4343, Cys-4370, Cys-4373, Cys-4381, and Cys-4383. Residues 4399–4653 enclose the NiRAN domain; the sequence is FLNRVCGVSA…TAESHVDTDL (255 aa). The LRR 7 repeat unit spans residues 4591–4616; the sequence is AGIVGVLTLDNQDLNGNWYDFGDFIQ. Residues Asn-4601 and Asp-4610 each contribute to the Mn(2+) site. The region spanning 4658-4756 is the Nsp12 Interface domain; that stretch reads IKWDLLKYDF…HNQDVNLHSS (99 aa). His-4687, Cys-4693, Cys-4698, Cys-4702, and Cys-4879 together coordinate Zn(2+). The region spanning 4757-5324 is the Nsp12 RNA-dependent RNA polymerase domain; the sequence is RLSFKELLVY…AMYTPHTVLQ (568 aa). The rdRp Fingers N-ter stretch occupies residues 4759-4973; it reads SFKELLVYAA…HQKLLKSIAA (215 aa). The interaction with RMP Remdesivir stretch occupies residues 4937–4947; that stretch reads KYAISAKNRAR. The rdRp Palm N-ter stretch occupies residues 4974–5012; that stretch reads TRGATVVIGTSKFYGGWHNMLKTVYSDVENPHLMGWDYP. The RdRp catalytic domain maps to 5004 to 5166; that stretch reads PHLMGWDYPK…CFNSTYASQG (163 aa). The rdRp Fingers C-ter stretch occupies residues 5013 to 5071; it reads KCDRAMPNMLRIMASLVLARKHTTCCSLSHRFYRLANECAQVLSEMVMCGGSLYVKPGG. Zn(2+)-binding residues include His-5034, Cys-5037, and Cys-5038. Positions 5072-5207 are rdRp Palm C-ter; the sequence is TSSGDATTAY…TKGPHEFCSQ (136 aa). Residues Ser-5151, Asp-5152, and Asp-5153 contribute to the active site. The rdRp Thumb stretch occupies residues 5208-5324; sequence HTMLVKQGDD…AMYTPHTVLQ (117 aa). One can recognise a CV ZBD domain in the interval 5325–5437; the sequence is AVGACVLCNS…TDFNAIATCD (113 aa). Residues Cys-5329, Cys-5332, Cys-5340, Cys-5343, Cys-5350, Cys-5353, His-5357, His-5363, Cys-5374, Cys-5379, Cys-5396, and His-5399 each contribute to the Zn(2+) site. An LRR 8 repeat occupies 5552 to 5572; that stretch reads TSHTVMPLSAPTLVPQEHYVR. Positions 5581–5762 constitute a (+)RNA virus helicase ATP-binding domain; that stretch reads NISDEFSSNV…MKTIGPDMFL (182 aa). 5606–5613 lines the a ribonucleoside 5'-triphosphate pocket; the sequence is GPPGTGKS. The 170-residue stretch at 5763–5932 folds into the (+)RNA virus helicase C-terminal domain; it reads GTCRRCPAEI…TLQAENVTGL (170 aa). The region spanning 5997 to 6212 is the ExoN domain; the sequence is MFITREEAIR…RCLAVHECFV (216 aa). Catalysis depends on residues Asp-6015, Glu-6017, and Glu-6116. Residues Asp-6015, Glu-6017, and Glu-6116 each coordinate Mg(2+). Cys-6132, Cys-6135, Cys-6151, His-6154, His-6182, Cys-6186, and His-6189 together coordinate Zn(2+). Residues His-6193 and Asp-6198 contribute to the active site. Residues His-6193 and Asp-6198 each contribute to the Mg(2+) site. Position 6204 (Cys-6204) interacts with Zn(2+). One can recognise an N7-MTase domain in the interval 6221–6452; it reads YPIIGDELKI…NLWNTFTRLQ (232 aa). Residue 6256 to 6262 participates in S-adenosyl-L-methionine binding; sequence DIGNPKA. The interval 6339-6353 is gpppA-binding; that stretch reads CDGGSLYVNKHAFHT. Cys-6377, Cys-6402, Cys-6409, and His-6412 together coordinate Zn(2+). The region spanning 6453-6513 is the Nsp15 N-terminal oligomerization domain; sequence SLENVAFNVV…NVAFELWAKR (61 aa). In terms of domain architecture, AV-Nsp11N/CoV-Nsp15M spans 6514 to 6639; that stretch reads NIKPVPEVKI…YYKKVDGVVQ (126 aa). In terms of domain architecture, NendoU spans 6656–6795; sequence KPRSQMEIDF…KDGHVETFYP (140 aa). Catalysis depends on His-6686, which acts as the Proton donor; for uridylate-specific endoribonuclease nsp15 activity. His-6701 acts as the Proton acceptor; for uridylate-specific endoribonuclease nsp15 activity in catalysis. Lys-6741 functions as the For uridylate-specific endoribonuclease nsp15 activity in the catalytic mechanism. Uracil contacts are provided by residues 6741–6745 and 6792–6796; these read KCVCS and TFYPK. The 295-residue stretch at 6800 to 7094 folds into the Nidovirus-type SAM-dependent 2'-O-MTase domain; it reads SQAWQPGVAM…RVVISSDVLV (295 aa). An LRR 9 repeat occupies 6817-6841; sequence RMLLEKCDLQNYGDSATLPKGIMMN. Active-site residues include Lys-6844, Asp-6928, Lys-6968, and Glu-7001.

The protein belongs to the coronaviruses polyprotein 1ab family. As to quaternary structure, interacts with host GIGYF2. In terms of assembly, may form homohexamers. Interacts with N protein. 3CL-PRO exists as monomer and homodimer. Only the homodimer shows catalytic activity. Interacts with host FBXO22; this interaction promotes the proteasomal degradation of nsp5. As to quaternary structure, interacts with PL-PRO and nsp6. In terms of assembly, forms homodimers. Interacts with host ZFYVE1 (DFCP1), which leads to ER and DMVs binding to lipid droplets. Interacts with host TBK1; this interaction decreases IRF3 phosphorylation by 57%, which leads to reduced IFN-beta production. Interacts with nsp8 and nsp12 to form the replication-transcription complex (RTC): nsp12, nsp7, two subunits of nsp8, and up to two subunits of nsp13. Eight copies of nsp7 and eight copies of nsp8 assemble to form a heterohexadecamer dsRNA-encircling ring structure. As to quaternary structure, interacts with nsp7, nsp13 and nsp12 to form the replication-transcription complex (RTC): nsp12, nsp7, two subunits of nsp8, and up to two subunits of nsp13. Eight copies of nsp7 and eight copies of nsp8 assemble to form a heterohexadecamer dsRNA-encircling ring structure. In terms of assembly, is a dimer. Interacts with NSP12. Interacts with host SND1. Forms a dodecamer and interacts with nsp14 and nsp16; these interactions enhance nsp14 and nsp16 enzymatic activities. As to quaternary structure, interacts with nsp7 and nsp8 to form the replication-transcription complex (RTC): nsp12, nsp7, two subunits of nsp8, and up to two subunits of nsp13. Interacts with nsp9. In terms of assembly, interacts with nsp8 to form the replication-transcription complex (RTC): nsp12, nsp7, two subunits of nsp8, and up to two subunits of nsp13. Interacts with host TBK1; this interaction inhibits TBK1 phosphorylation and decreases by 75% IRF3 phosphorylation, which leads to reduced IFN-beta production. Interacts (via N-terminus) with DDX1. Interacts with nsp10. As to quaternary structure, homohexamer. In terms of assembly, interacts with nsp10. Mn(2+) is required as a cofactor. The cofactor is Mg(2+). Specific enzymatic cleavages in vivo by its own proteases yield mature proteins. 3CL-PRO and PL-PRO proteinases are autocatalytically processed.

Its subcellular location is the host cytoplasm. It localises to the host endosome. The protein localises to the host endoplasmic reticulum membrane. It is found in the host Golgi apparatus. The protein resides in the host nucleus. Its subcellular location is the host perinuclear region. It localises to the host endoplasmic reticulum. The protein localises to the host endoplasmic reticulum-Golgi intermediate compartment. It catalyses the reaction RNA(n) + a ribonucleoside 5'-triphosphate = RNA(n+1) + diphosphate. The enzyme catalyses ATP + H2O = ADP + phosphate + H(+). It carries out the reaction TSAVLQ-|-SGFRK-NH2 and SGVTFQ-|-GKFKK the two peptides corresponding to the two self-cleavage sites of the SARS 3C-like proteinase are the two most reactive peptide substrates. The enzyme exhibits a strong preference for substrates containing Gln at P1 position and Leu at P2 position.. The catalysed reaction is Thiol-dependent hydrolysis of ester, thioester, amide, peptide and isopeptide bonds formed by the C-terminal Gly of ubiquitin (a 76-residue protein attached to proteins as an intracellular targeting signal).. It catalyses the reaction a 5'-end (N(7)-methyl 5'-triphosphoguanosine)-ribonucleoside in mRNA + S-adenosyl-L-methionine = a 5'-end (N(7)-methyl 5'-triphosphoguanosine)-(2'-O-methyl-ribonucleoside) in mRNA + S-adenosyl-L-homocysteine + H(+). The enzyme catalyses uridylyl-uridylyl-ribonucleotide-RNA = a 3'-end uridylyl-2',3'-cyclophospho-uridine-RNA + a 5'-end dephospho-ribonucleoside-RNA. It carries out the reaction a 5'-end diphospho-ribonucleoside in mRNA + GTP + H(+) = a 5'-end (5'-triphosphoguanosine)-ribonucleoside in mRNA + diphosphate. The catalysed reaction is a 5'-end (5'-triphosphoguanosine)-ribonucleoside in mRNA + S-adenosyl-L-methionine = a 5'-end (N(7)-methyl 5'-triphosphoguanosine)-ribonucleoside in mRNA + S-adenosyl-L-homocysteine. Its activity is regulated as follows. Inhibited in vitro by GRL-0617. Inhibited ex vivo by K22. It may shift NSP6 zippering activity towards the nuclear envelope, thereby impairing formation of the NSP6-compartment necessary for viral transcription/replication. With respect to regulation, inhibited by Remdesivir antiviral drug (GS-5734). Its activity is regulated as follows. Inhibited by Remdesivir antiviral drug (GS-5734) through non-obligate RNA chain termination. Inhibited by pyridone-containing alpha-ketoamides compounds 13a and 13b. In turn, alpha-ketoamide 13b (tert-butyl (1-((S)-1-(((S)-4-(benzylamino)-3,4-dioxo-1-((S)-2-oxopyrrolidin-3-yl)butan-2-yl)amino)-3-cyclopropyl-1-oxopropan-2-yl)-2-oxo-1,2-dihydropyridin-3-yl)carbamate) inhibits SARS-CoV-2 replication in human lung cells. Inhibited ex vivo by michael acceptor inhibitor N3. Inhibited ex vivo by compound 11a and 11b. Functionally, multifunctional protein involved in the transcription and replication of viral RNAs. Contains the proteinases responsible for the cleavages of the polyprotein. Its function is as follows. Inhibits host translation by associating with the open head conformation of the 40S subunit. The C-terminus binds to and obstructs ribosomal mRNA entry tunnel. Thereby inhibits antiviral response triggered by innate immunity or interferons. The nsp1-40S ribosome complex further induces an endonucleolytic cleavage near the 5'UTR of host mRNAs, targeting them for degradation. This inhibits the integrated stress response (ISR) in the infected cell by preventing EIF2S1/eIF2-alpha phosphorylation upstream of stress granule formation and depletes host G3BP1. Viral mRNAs less susceptible to nsp1-mediated inhibition of translation, because of their 5'-end leader sequence. Enhances mRNA repression of the 4EHP-GYF2 complex in the host, thereby inhibiting the antiviral response and facilitating SARS-CoV-2 replication. Possibly acts in cooperation with nsp1, which induces ribosome stalling on host mRNA, triggering mRNA repression by the host 4EHP-GYF2 complex which is enhanced by nsp2. In terms of biological role, responsible for the cleavages located at the N-terminus of the replicase polyprotein. Participates together with nsp4 in the assembly of virally-induced cytoplasmic double-membrane vesicles necessary for viral replication. Antagonizes innate immune induction of type I interferon by blocking the phosphorylation, dimerization and subsequent nuclear translocation of host IRF3. Also prevents host NF-kappa-B signaling. In addition, PL-PRO possesses a deubiquitinating/deISGylating activity and processes both 'Lys-48'- and 'Lys-63'-linked polyubiquitin chains from cellular substrates. Cleaves preferentially ISG15 from antiviral protein IFIH1 (MDA5), but not RIGI. Can play a role in host ADP-ribosylation by ADP-ribose. Plays a role in the formation and maintenance of double membrane vesicles (DMVs) replication organelles. DMVs are formed by nsp3 and nsp4, while nsp6 zippers ER membranes and connects to lipid droplets. Functionally, plays a role in the formation and maintenance of double membrane vesicles (DMVs) replication organelles. DMVs are formed by nsp3 and nsp4, while nsp6 zippers ER membranes and connects to lipid droplets. Its function is as follows. Cleaves the C-terminus of replicase polyprotein at 11 sites. Recognizes substrates containing the core sequence [ILMVF]-Q-|-[SGACN]. Cleaves and inactivates human TRMT1, preventing tRNA guanine(26)-dimethylation of tRNAs. May cleave human NLRP1 in lung epithelial cells, thereby activating the NLRP1 inflammasome pathway. May cleave human GSDMD, triggering alternative GSDME-mediated epithelial cell death upon activation of the NLRP1 inflammasome, which may enhance the release interleukins 1B, 6, 16 and 18. Also able to bind an ADP-ribose-1''-phosphate (ADRP). Plays a role in the formation and maintenance of double membrane vesicles (DMVs) replication organelles. DMVs are formed by nsp3 and nsp4, while nsp6 zippers ER membranes and connects to lipid droplets. LDs are consumed during DMV formation. Binds to host TBK1 without affecting TBK1 phosphorylation; the interaction with TBK1 decreases IRF3 phosphorylation, which leads to reduced IFN-beta production. In terms of biological role, plays a role in viral RNA synthesis. Forms a hexadecamer with nsp8 (8 subunits of each) that may participate in viral replication by acting as a primase. Alternatively, may synthesize substantially longer products than oligonucleotide primers. Functionally, plays a role in viral RNA synthesis. Forms a hexadecamer with nsp7 (8 subunits of each) that may participate in viral replication by acting as a primase. Alternatively, may synthesize substantially longer products than oligonucleotide primers. Interacts with ribosome signal recognition particle RNA (SRP). Together with NSP9, suppress protein integration into the cell membrane, thereby disrupting host immune defenses. Its function is as follows. Forms a primer, NSP9-pU, which is utilized by the polymerase for the initiation of RNA chains. Interacts with ribosome signal recognition particle RNA (SRP). Together with NSP8, suppress protein integration into the cell membrane, thereby disrupting host immune defenses. Plays a pivotal role in viral transcription by stimulating both nsp14 3'-5' exoribonuclease and nsp16 2'-O-methyltransferase activities. Therefore plays an essential role in viral mRNAs cap methylation. In terms of biological role, RNA-directed RNA polymerase that catalyzes the transcription of viral genomic and subgenomic RNAs. Acts in complex with nsp7 and nsp8 to transcribe both the minus and positive strands of genomic RNA. The kinase-like NiRAN domain of NSP12 attaches one or more nucleotides to the amino terminus of NSP9, forming a covalent RNA-protein intermediate that serves as transcription/replication primer. Subgenomic RNAs (sgRNAs) are formed by discontinuous transcription: The polymerase has the ability to pause at transcription-regulating sequences (TRS) and jump to the leader TRS, resulting in a major deletion. This creates a series of subgenomic RNAs that are replicated, transcribed and translated. In addition, Nsp12 is a subunit of the viral RNA capping enzyme that catalyzes the RNA guanylyltransferase reaction for genomic and sub-genomic RNAs. Subsequently, the NiRAN domain transfers RNA to GDP, and forms the core cap structure GpppA-RNA. Functionally, plays a role in viral RNA synthesis. Multi-functional protein with a zinc-binding domain in N-terminus displaying RNA and DNA duplex-unwinding activities with 5' to 3' polarity. Activity of helicase is dependent on magnesium. Binds to host TBK1 and inhibits TBK1 phosphorylation; the interaction with TBK1 decreases IRF3 phosphorylation, which leads to reduced IFN-beta production. Its function is as follows. Plays a role in viral RNA synthesis through two distinct activities. The N7-guanine methyltransferase activity plays a role in the formation of the cap structure GpppA-RNA. The proofreading exoribonuclease reduces the sensitivity of the virus to RNA mutagens during replication. This activity acts on both ssRNA and dsRNA in a 3'-5' direction. Plays a role in viral transcription/replication and prevents the simultaneous activation of host cell dsRNA sensors, such as MDA5/IFIH1, OAS, and PKR. Acts by degrading the 5'-polyuridines generated during replication of the poly(A) region of viral genomic and subgenomic RNAs. Catalyzes a two-step reaction in which a 2'3'-cyclic phosphate (2'3'-cP) is first generated by 2'-O transesterification, which is then hydrolyzed to a 3'-phosphate (3'-P). If not degraded, poly(U) RNA would hybridize with poly(A) RNA tails and activate host dsRNA sensors. May bind genomic dsRNA in association with the replication-transcription complex (RTC), and play a role in nsp12 discontinous transcription. In terms of biological role, methyltransferase that mediates mRNA cap 2'-O-ribose methylation to the 5'-cap structure of viral mRNAs. N7-methyl guanosine cap is a prerequisite for binding of nsp16. Therefore, it plays an essential role in cap methylation of viral mRNAs, which is essential to evade the immune system, especially when restricted by human IFIT1 and IFIT3. May disrupt host mRNA splicing in nucleus by interacting with pre-mRNA Recognition Domains of the U1 and U2 snRNAs. This chain is Replicase polyprotein 1ab (rep), found in Homo sapiens (Human).